The sequence spans 312 residues: tRNA dimethylallyltransferase (312 aa).

11–18 (GPTAAGKS) contributes to the ATP binding site. Residue 13–18 (TAAGKS) participates in substrate binding. 3 interaction with substrate tRNA regions span residues 36–39 (DSAT), 160–164 (QRIQR), and 243–248 (RCVGYR).

This sequence belongs to the IPP transferase family. As to quaternary structure, monomer. Mg(2+) is required as a cofactor.

The enzyme catalyses adenosine(37) in tRNA + dimethylallyl diphosphate = N(6)-dimethylallyladenosine(37) in tRNA + diphosphate. Its function is as follows. Catalyzes the transfer of a dimethylallyl group onto the adenine at position 37 in tRNAs that read codons beginning with uridine, leading to the formation of N6-(dimethylallyl)adenosine (i(6)A). This is tRNA dimethylallyltransferase from Bordetella avium (strain 197N).